The chain runs to 81 residues: Omega-conotoxin-like TxMKLT1-0223 (81 aa).

The N-terminal stretch at 1 to 22 (MKLTCMMIVAVLFLTAWTFVTA) is a signal peptide. Residues 23-52 (VPHSSNALENLYLKARHEMENPEASKLNTR) constitute a propeptide that is removed on maturation. Disulfide bonds link Cys55–Cys72, Cys62–Cys76, and Cys71–Cys80.

The protein belongs to the conotoxin O1 superfamily. Expressed by the venom duct.

Its subcellular location is the secreted. Functionally, omega-conotoxins act at presynaptic membranes, they bind and block voltage-gated calcium channels (Cav). The sequence is that of Omega-conotoxin-like TxMKLT1-0223 from Conus textile (Cloth-of-gold cone).